A 298-amino-acid polypeptide reads, in one-letter code: Glutamyl-Q tRNA(Asp) synthetase (298 aa).

L-glutamate-binding positions include 9–13 (RFAPS) and Glu-45. The 'HIGH' region motif lies at 12–22 (PSPSGELHFGS). Zn(2+) is bound by residues Cys-101, Cys-103, Tyr-115, and Cys-119. The L-glutamate site is built by Tyr-172 and Arg-190. Positions 228-232 (KLSKQ) match the 'KMSKS' region motif. Lys-231 is a binding site for ATP.

Belongs to the class-I aminoacyl-tRNA synthetase family. GluQ subfamily. Zn(2+) serves as cofactor.

Its function is as follows. Catalyzes the tRNA-independent activation of glutamate in presence of ATP and the subsequent transfer of glutamate onto a tRNA(Asp). Glutamate is transferred on the 2-amino-5-(4,5-dihydroxy-2-cyclopenten-1-yl) moiety of the queuosine in the wobble position of the QUC anticodon. This is Glutamyl-Q tRNA(Asp) synthetase from Salmonella typhi.